The chain runs to 292 residues: Probable deoxyhypusine synthase (292 aa).

Lysine 267 serves as the catalytic Nucleophile.

The protein belongs to the deoxyhypusine synthase family. Requires NAD(+) as cofactor.

It carries out the reaction [eIF5A protein]-L-lysine + spermidine = [eIF5A protein]-deoxyhypusine + propane-1,3-diamine. The protein operates within protein modification; eIF5A hypusination. In terms of biological role, catalyzes the NAD-dependent oxidative cleavage of spermidine and the subsequent transfer of the butylamine moiety of spermidine to the epsilon-amino group of a specific lysine residue of the eIF-5A precursor protein to form the intermediate deoxyhypusine residue. The chain is Probable deoxyhypusine synthase (dys) from Pyrobaculum aerophilum (strain ATCC 51768 / DSM 7523 / JCM 9630 / CIP 104966 / NBRC 100827 / IM2).